A 464-amino-acid chain; its full sequence is Glucose-6-phosphate isomerase (464 aa).

The active-site Proton donor is the E290. Active-site residues include H319 and K433.

It belongs to the GPI family.

It is found in the cytoplasm. It catalyses the reaction alpha-D-glucose 6-phosphate = beta-D-fructose 6-phosphate. Its pathway is carbohydrate biosynthesis; gluconeogenesis. The protein operates within carbohydrate degradation; glycolysis; D-glyceraldehyde 3-phosphate and glycerone phosphate from D-glucose: step 2/4. Its function is as follows. Catalyzes the reversible isomerization of glucose-6-phosphate to fructose-6-phosphate. The chain is Glucose-6-phosphate isomerase from Carboxydothermus hydrogenoformans (strain ATCC BAA-161 / DSM 6008 / Z-2901).